A 712-amino-acid chain; its full sequence is MAEYTRSISFYGREIDINIGLMAPQAGCGVWLTSGETSVLVTATRQAGRAGVDFLPLLVDYEERLYAAGRIPGGYLRREGRPPERATLISRLIDRPLRPLFPEWLRDDVQIVATTLSVDDKVPPDVLCILGASLAIHSARIPFNGPVAAVRVGLVKDEFIINPTYAEIEAGDLDLVVAGCADGVIMVEAGANQLPEKDVVEAIEFGFEAVQELLKAQQQVFADLNITPVELPPPPQNEELVAFVAEHAQEEIRSVLRQFLDKTSREQQLEAIKAKLEAQIQARPEGDPLRLYLLENPKELDNQFKALTKKLMRQQILQEGVRVDGRKLDEVRPVSCRVGLIPRVHGSALFNRGLTQVLSITTLGTPGDAQELDDLHPVDEKRYMHHYNFPGFSVGEVRPSRSPGRREIGHGALAERALVPVLPKEEEFPYVVRVVSEVLSSNGSTSMASVCGSTLSLMDAGVPIKAPVSGVAMGLIKEGDEVRILTDIQGIEDFLGDMDFKVAGTRAGITALQMDMKITGITVDVVEKALLQAKAGRDYILDKMLEVLPAPRPQLAKTAPRLLTFKVDPEDIGKIIGPGGKMVRSITEATGAKVDISDDGTITVSSSVGGQAEAARAMIENLVRRVEEGQVYLGKVTRIIPIGAFVEFLPGKEGMIHISQLAEYRVSRVEDEIAVADEVVVKVRSIDHKGRVNLTRLGISPEEAARVRNHHP.

Mg(2+) is bound by residues Asp-493 and Asp-499. Residues 560–619 form the KH domain; it reads PRLLTFKVDPEDIGKIIGPGGKMVRSITEATGAKVDISDDGTITVSSSVGGQAEAARAMI. Positions 629 to 697 constitute an S1 motif domain; that stretch reads GQVYLGKVTR…HKGRVNLTRL (69 aa).

It belongs to the polyribonucleotide nucleotidyltransferase family. Mg(2+) serves as cofactor.

The protein localises to the cytoplasm. It carries out the reaction RNA(n+1) + phosphate = RNA(n) + a ribonucleoside 5'-diphosphate. Its function is as follows. Involved in mRNA degradation. Catalyzes the phosphorolysis of single-stranded polyribonucleotides processively in the 3'- to 5'-direction. This chain is Polyribonucleotide nucleotidyltransferase, found in Synechococcus sp. (strain JA-3-3Ab) (Cyanobacteria bacterium Yellowstone A-Prime).